The chain runs to 205 residues: Small ribosomal subunit protein uS3c (205 aa).

One can recognise a KH type-2 domain in the interval 37-106 (IRQLLRDYVL…TWRISLVEVS (70 aa)).

The protein belongs to the universal ribosomal protein uS3 family. Part of the 30S ribosomal subunit.

The protein localises to the plastid. It is found in the chloroplast. The sequence is that of Small ribosomal subunit protein uS3c (rps3) from Cyanidioschyzon merolae (strain NIES-3377 / 10D) (Unicellular red alga).